A 478-amino-acid polypeptide reads, in one-letter code: Protein nucleotidyltransferase YdiU (478 aa).

ATP-binding residues include Gly84, Gly86, Arg87, Lys107, Asp119, Gly120, Arg170, and Arg177. The Proton acceptor role is filled by Asp246. The Mg(2+) site is built by Asn247 and Asp256. Position 256 (Asp256) interacts with ATP.

This sequence belongs to the SELO family. Requires Mg(2+) as cofactor. The cofactor is Mn(2+).

It carries out the reaction L-seryl-[protein] + ATP = 3-O-(5'-adenylyl)-L-seryl-[protein] + diphosphate. The enzyme catalyses L-threonyl-[protein] + ATP = 3-O-(5'-adenylyl)-L-threonyl-[protein] + diphosphate. The catalysed reaction is L-tyrosyl-[protein] + ATP = O-(5'-adenylyl)-L-tyrosyl-[protein] + diphosphate. It catalyses the reaction L-histidyl-[protein] + UTP = N(tele)-(5'-uridylyl)-L-histidyl-[protein] + diphosphate. It carries out the reaction L-seryl-[protein] + UTP = O-(5'-uridylyl)-L-seryl-[protein] + diphosphate. The enzyme catalyses L-tyrosyl-[protein] + UTP = O-(5'-uridylyl)-L-tyrosyl-[protein] + diphosphate. In terms of biological role, nucleotidyltransferase involved in the post-translational modification of proteins. It can catalyze the addition of adenosine monophosphate (AMP) or uridine monophosphate (UMP) to a protein, resulting in modifications known as AMPylation and UMPylation. The chain is Protein nucleotidyltransferase YdiU from Escherichia coli O157:H7.